The chain runs to 384 residues: Signal peptide peptidase-like 3 (384 aa).

Residues 1-8 (MAEQTYSW) lie on the Lumenal side of the membrane. The helical transmembrane segment at 9 to 29 (AYSLVDSSQVSTFLISILLIV) threads the bilayer. The Cytoplasmic segment spans residues 30 to 73 (YGSFRSLNMDFENQDKEKDSNSSSGSFNGNSTNNSIQTIDSTQA). The chain crosses the membrane as a helical span at residues 74–94 (LFLPIGASVSLLVMFFFFDSV). Gln95 is a topological domain (lumenal). Residues 96 to 116 (VVFTICTAVLATIAFAFLLLP) traverse the membrane as a helical segment. Topologically, residues 117–138 (MCQYLTRPCSPQNKISFGCCGR) are cytoplasmic. Residues 139 to 159 (FTAAELLSFSLSVMLVLIWVL) traverse the membrane as a helical segment. The Lumenal segment spans residues 160–164 (TGHWL). The chain crosses the membrane as a helical span at residues 165–185 (LMDALAMGLCVAMIAFVRLPS). Over 186–190 (LKVSC) the chain is Cytoplasmic. Residues 191-211 (LLLSGLLIYDVFWVFFSAYIF) traverse the membrane as a helical segment. The active site involves Asp200. Residues 212–262 (NSNVMVKVATQPADNPLDVLSRKLHLGPNVGRDVPRLSLPGKLVFPSSTGS) are Lumenal-facing. Residues 263 to 283 (HFSMLGIGDIVMPGLLLCFVL) traverse the membrane as a helical segment. The active site involves Asp271. The Cytoplasmic portion of the chain corresponds to 284–311 (RYDNYKKQASGDSCGAPGPANISGRMQK). The helical transmembrane segment at 312 to 332 (VSYFHCTLIGYFVGLLTATVA) threads the bilayer. At 333 to 339 (SRIHRAA) the chain is on the lumenal side. Residues 340 to 360 (QPALLYLVPFTLLPLLTMAYL) traverse the membrane as a helical segment. Residues 341-343 (PAL) carry the PAL motif. The Cytoplasmic portion of the chain corresponds to 361–384 (KGDLRRMWSEPFHSKSSSSRFLEV).

This sequence belongs to the peptidase A22B family. As to quaternary structure, monomer. Homodimer. Interacts with STIM1 (via transmembrane region and SOAR/CAD domain); the interaction promotes the binding of STIM1 to ORAI1. In terms of processing, not glycosylated.

The protein localises to the endoplasmic reticulum membrane. Its subcellular location is the golgi apparatus. It is found in the membrane. Its activity is regulated as follows. Its proteolytic activity is blocked by a signal peptide peptidase (SPP) inhibitor, (ZLL)2-ketone (ZLL) or a gamma-secretase inhibitor, LY411,575. In terms of biological role, intramembrane-cleaving aspartic protease (I-CLiP) that cleaves type II membrane protein substrates in or close to their luminal transmembrane domain boundaries. Acts like a sheddase by mediating the proteolytic release and secretion of active site-containing ectodomains of glycan-modifiying glycosidase and glycosyltransferase enzymes such as MGAT5, B4GAT1 and B4GALT1. Plays a role in the regulation of cellular glycosylation processes. Required to link T-cell antigen receptor (TCR) and calcineurin-NFAT signaling cascades in lymphocytes by promoting the association of STIM1 and ORAI1 during store-operated calcium entry (SOCE) in a protease-independent manner. The protein is Signal peptide peptidase-like 3 of Mus musculus (Mouse).